The sequence spans 119 residues: uncharacterized protein (119 aa).

This is an uncharacterized protein from Dactylococcopsis salina (Myxobaktron salinum).